The chain runs to 424 residues: MLDIKRIRTDFEAVAEKLATRGVDAAVLNEMKEIDAKRRNILIKVETLKAERNTVSAEIAQAKRNKENTDDKIAAMQNLSAEVKALDAELAEIDAKLTEFTTTLPNIPADSVPVGADXXXNVEVRRWGTPREFDFEPKAHWDLGEDLGILDWERGGKVTGARFLFYKGLGARLERAIYNFMLDEHGKEGYTEVITPYIVNHDSMFGTGQYPKFKEDTFELSDTNFVLIPTAEVPLTNYYRDEILDGKDLPIYFTAMSPSFRSEAGSAGRDTRGLIRLHQFHKVEMVKFAKPEESYEELEKMTANAENILQKLNLPYRVVALSTGDMGFSATKTYDLEVWIPAQNNYREISSCSNTEDFQARRAQIRYRDEADGKVKLLHTLNGSGLAVGRTVAAILENYQNEDGSVTIPEALRPYMGGAEVIKP.

230 to 232 is a binding site for L-serine; it reads TAE. An ATP-binding site is contributed by 261–263; sequence RSE. Glutamate 284 is an L-serine binding site. 348–351 provides a ligand contact to ATP; it reads EISS. An L-serine-binding site is contributed by serine 384.

This sequence belongs to the class-II aminoacyl-tRNA synthetase family. Type-1 seryl-tRNA synthetase subfamily. As to quaternary structure, homodimer. The tRNA molecule binds across the dimer.

The protein localises to the cytoplasm. It carries out the reaction tRNA(Ser) + L-serine + ATP = L-seryl-tRNA(Ser) + AMP + diphosphate + H(+). The enzyme catalyses tRNA(Sec) + L-serine + ATP = L-seryl-tRNA(Sec) + AMP + diphosphate + H(+). It functions in the pathway aminoacyl-tRNA biosynthesis; selenocysteinyl-tRNA(Sec) biosynthesis; L-seryl-tRNA(Sec) from L-serine and tRNA(Sec): step 1/1. Catalyzes the attachment of serine to tRNA(Ser). Is also able to aminoacylate tRNA(Sec) with serine, to form the misacylated tRNA L-seryl-tRNA(Sec), which will be further converted into selenocysteinyl-tRNA(Sec). This is Serine--tRNA ligase from Streptococcus pneumoniae serotype 19F (strain G54).